Consider the following 106-residue polypeptide: Urease subunit beta (106 aa).

It belongs to the urease beta subunit family. In terms of assembly, heterotrimer of UreA (gamma), UreB (beta) and UreC (alpha) subunits. Three heterotrimers associate to form the active enzyme.

The protein localises to the cytoplasm. It catalyses the reaction urea + 2 H2O + H(+) = hydrogencarbonate + 2 NH4(+). The protein operates within nitrogen metabolism; urea degradation; CO(2) and NH(3) from urea (urease route): step 1/1. In Acinetobacter baumannii (strain ATCC 17978 / DSM 105126 / CIP 53.77 / LMG 1025 / NCDC KC755 / 5377), this protein is Urease subunit beta.